A 68-amino-acid polypeptide reads, in one-letter code: Cytochrome c3 (68 aa).

Residues H17, H20, C26, C29, H30, H45, C49, C52, H53, C62, C65, and H66 each contribute to the heme site.

In terms of processing, binds 3 heme groups per subunit.

In terms of biological role, participates in sulfate respiration coupled with phosphorylation by transferring electrons from the enzyme dehydrogenase to ferredoxin. The sequence is that of Cytochrome c3 (cyd) from Desulfuromonas acetoxidans (Chloropseudomonas ethylica).